We begin with the raw amino-acid sequence, 484 residues long: Calcium-dependent protein kinase 31 (484 aa).

Gly2 carries the N-myristoyl glycine lipid modification. Residues Tyr28 to Met290 enclose the Protein kinase domain. Residues Leu34–Thr42 and Lys57 each bind ATP. The Proton acceptor role is filled by Asp156. Ser196 carries the post-translational modification Phosphoserine. The tract at residues Ala295–Ile325 is autoinhibitory domain. EF-hand domains are found at residues Glu332–Asn367, Leu368–Leu403, Asp404–Gly439, and Ile444–Leu474. Ca(2+) contacts are provided by Asp345, Asp347, Ser349, Thr351, Glu356, Asp381, Asp383, Asn385, Thr387, Glu392, Asp417, Asp419, Asp421, His423, Glu428, Asp452, Asp454, Asp456, Lys458, and Glu463.

Belongs to the protein kinase superfamily. Ser/Thr protein kinase family. CDPK subfamily.

It is found in the membrane. The enzyme catalyses L-seryl-[protein] + ATP = O-phospho-L-seryl-[protein] + ADP + H(+). The catalysed reaction is L-threonyl-[protein] + ATP = O-phospho-L-threonyl-[protein] + ADP + H(+). With respect to regulation, activated by calcium. Autophosphorylation may play an important role in the regulation of the kinase activity. May play a role in signal transduction pathways that involve calcium as a second messenger. In Arabidopsis thaliana (Mouse-ear cress), this protein is Calcium-dependent protein kinase 31 (CPK31).